A 295-amino-acid chain; its full sequence is RNA polymerase sigma factor RpoH (295 aa).

A sigma-70 factor domain-2 region spans residues 52 to 121 (MVTSHLRLVA…IQEYILRSWS (70 aa)). The Interaction with polymerase core subunit RpoC signature appears at 76 to 79 (EVIS). A sigma-70 factor domain-4 region spans residues 230-281 (AMVELTDRERHILTERRLKDDPTTLEELAAQYGVSRERVRQIEVRAFEKLQK). Positions 254–273 (LEELAAQYGVSRERVRQIEV) form a DNA-binding region, H-T-H motif.

The protein belongs to the sigma-70 factor family. RpoH subfamily. Interacts with the RNA polymerase core enzyme.

It is found in the cytoplasm. Its function is as follows. Sigma factors are initiation factors that promote the attachment of RNA polymerase to specific initiation sites and are then released. This sigma factor is involved in regulation of expression of heat shock genes. This chain is RNA polymerase sigma factor RpoH, found in Caulobacter vibrioides (strain ATCC 19089 / CIP 103742 / CB 15) (Caulobacter crescentus).